Here is a 438-residue protein sequence, read N- to C-terminus: MQTIYTKITDIKGNLITVEAEGASLGELVQIERADGRSSYASVLRFDARKVTLQVFGGTSGLSTGDKVIFLGRPMEVIYGDSLLGRRFNGTGKPIDREDECFGEPIPITTPSFNPVCRIVPREMVRTNIPMIDMFNCLVKSQKIPIFSSSGENHNALLMRIAAQTDADIVIIGGMGLTFVDYNFFVKESQRLGFADKCVMFIHKAVDAPVECVLIPDMALACAERFALEQKKNVLVLLTDMTAFADALKEMAITMDQIPANRGYPGSLYSDLAVRYEKAVDIAQGGSITLISVTTMPGDDITHPVPDNTGFITEGQFYLKDNRIDPFGSLSRLKQLVIGKKTREDHGDLANALIRLYADSRKSAERMSMGFKLSNWDKKLLAFSELFEARLMSLEVNIPLEEALDIGWKILYQSFHSEEVGIKEQLIQKYWPKACLHK.

Belongs to the ATPase alpha/beta chains family.

In terms of biological role, produces ATP from ADP in the presence of a proton gradient across the membrane. The V-type beta chain is a regulatory subunit. The chain is V-type ATP synthase beta chain from Chlamydia trachomatis serovar A (strain ATCC VR-571B / DSM 19440 / HAR-13).